Reading from the N-terminus, the 458-residue chain is Transmembrane protein 135 (458 aa).

A run of 6 helical transmembrane segments spans residues 68 to 88, 96 to 116, 149 to 169, 298 to 318, 331 to 351, and 377 to 397; these read ILQS…FFCI, FYSW…AILI, TLRN…MFFF, FQLG…SCFL, IVAG…TISM, and ADTI…VMEV.

The protein belongs to the TMEM135 family.

The protein localises to the mitochondrion membrane. It localises to the peroxisome membrane. Functionally, involved in mitochondrial metabolism by regulating the balance between mitochondrial fusion and fission. May act as a regulator of mitochondrial fission that promotes DNM1L-dependent fission through activation of DNM1L. May be involved in peroxisome organization. The sequence is that of Transmembrane protein 135 from Mus musculus (Mouse).